An 86-amino-acid chain; its full sequence is Neurotoxin 3FTx-RK (86 aa).

The signal sequence occupies residues 1–21; sequence MKTLLLTLVVVTIVCLELGYT. Intrachain disulfides connect Cys24/Cys45, Cys38/Cys63, Cys67/Cys78, and Cys79/Cys84.

In terms of tissue distribution, expressed by the venom gland.

The protein resides in the secreted. This is Neurotoxin 3FTx-RK from Bungarus fasciatus (Banded krait).